Here is a 490-residue protein sequence, read N- to C-terminus: Cyclin-T1-3 (490 aa).

Disordered stretches follow at residues 275 to 391 and 414 to 490; these read RVAP…GDVA and AAED…RLRS. 2 stretches are compositionally biased toward polar residues: residues 282-298 and 352-365; these read QGND…NQRA and TANS…SSTM. Composition is skewed to basic and acidic residues over residues 367–391 and 457–490; these read AMKK…GDVA and QEYR…RLRS.

It belongs to the cyclin family. Cyclin T subfamily.

The polypeptide is Cyclin-T1-3 (CYCT1-3) (Oryza sativa subsp. japonica (Rice)).